The following is a 103-amino-acid chain: UPF0235 protein RHECIAT_CH0004196 (103 aa).

Belongs to the UPF0235 family.

In Rhizobium etli (strain CIAT 652), this protein is UPF0235 protein RHECIAT_CH0004196.